Here is a 110-residue protein sequence, read N- to C-terminus: Parvalbumin alpha (110 aa).

2 EF-hand domains span residues 39–74 (KGPDVMKQVFGILDQDRSGFIEEDELCLMLKGFTPN) and 78–110 (LSVKETTALLAAGDKDGDGKIGMDEFVTLVSES). Residues aspartate 52, aspartate 54, serine 56, phenylalanine 58, glutamate 60, glutamate 63, aspartate 91, aspartate 93, aspartate 95, lysine 97, and glutamate 102 each contribute to the Ca(2+) site.

The protein belongs to the parvalbumin family.

In muscle, parvalbumin is thought to be involved in relaxation after contraction. It binds two calcium ions. In Aquarana catesbeiana (American bullfrog), this protein is Parvalbumin alpha.